The sequence spans 390 residues: Homeobox protein Meis1 (390 aa).

In terms of domain architecture, MEIS N-terminal spans 108 to 192; it reads GGDVCSSESF…IDLVIDDREG (85 aa). Residues 190-202 are compositionally biased toward basic and acidic residues; that stretch reads REGGSKSDSEDIT. The tract at residues 190–279 is disordered; the sequence is REGGSKSDSE…KKRHKKRGIF (90 aa). A compositionally biased stretch (polar residues) spans 203 to 213; it reads RSANLTDQPSW. The homeobox; TALE-type DNA-binding region spans 272–334; the sequence is RHKKRGIFPK…NARRRIVQPM (63 aa). An interaction with DNA region spans residues 299–329; sequence YPSEEQKKQLAQDTGLTILQVNNWFINARRR. Residues 335–390 form a required for transcriptional activation region; that stretch reads IDQSNRAVSQGTPYNPDGQPMGGFVMDGQQHMGIRAPGPMSGMGMNMGMEGQWHYM.

The protein belongs to the TALE/MEIS homeobox family. Interacts with the N-terminal region of PBX1 to form a heterodimer which binds DNA including a cAMP-responsive sequence in CYP17. Also forms heterodimers with PBX2. Forms heterotrimers with PBX1 or PBX2 and a number of HOX proteins including HOXA9, HOXD4 and HOXD9 where it acts as a non-DNA-binding partner. Also forms heterotrimers with PBX1 and HOX proteins including HOXD9 and HOXD10 where PBX1 is the non-DNA-binding partner. Heterodimer with DLX3. Heterodimer with HOXB13. In terms of tissue distribution, expressed at low level in normal immunohepatopoietic tissues, including the fetal liver. Expressed in a subset of myeloid leukemia cell lines, with the highest expression seen in those with a megakaryocytic-erythroid phenotype. Also expressed at high levels in the cerebellum.

It is found in the nucleus. Its function is as follows. Acts as a transcriptional regulator of PAX6. Acts as a transcriptional activator of PF4 in complex with PBX1 or PBX2. Required for hematopoiesis, megakaryocyte lineage development and vascular patterning. May function as a cofactor for HOXA7 and HOXA9 in the induction of myeloid leukemias. This chain is Homeobox protein Meis1 (MEIS1), found in Homo sapiens (Human).